Here is a 760-residue protein sequence, read N- to C-terminus: Formin-like protein 8 (760 aa).

The N-terminal stretch at 1–29 (MAAMFNHPWPNLTLIYFFFIVVLPFQSLS) is a signal peptide. The span at 52 to 63 (PLLPPSSNPSPP) shows a compositional bias: pro residues. The disordered stretch occupies residues 52 to 71 (PLLPPSSNPSPPSNNSSSSD). A helical membrane pass occupies residues 78 to 98 (AVLITAASTLLVAGVFFFCLQ). The tract at residues 204–313 (TEIPLLRGRS…VKLKPLHWDK (110 aa)) is disordered. The segment covering 253–274 (TPSPPPPIKKGSSPSPPPPPPV) has biased composition (pro residues). The region spanning 296–732 (SGGETSKQVK…GSPISPSSQR (437 aa)) is the FH2 domain.

It belongs to the formin-like family. Class-I subfamily. Interacts with profilin.

It is found in the cell membrane. Its function is as follows. Might be involved in the organization and polarity of the actin cytoskeleton. Interacts with the barbed end of actin filaments and nucleates actin-filament polymerization in vitro. The polypeptide is Formin-like protein 8 (FH8) (Arabidopsis thaliana (Mouse-ear cress)).